A 1379-amino-acid polypeptide reads, in one-letter code: DNA-directed RNA polymerase subunit beta (1379 aa).

Belongs to the RNA polymerase beta chain family. In terms of assembly, the RNAP catalytic core consists of 2 alpha, 1 beta, 1 beta' and 1 omega subunit. When a sigma factor is associated with the core the holoenzyme is formed, which can initiate transcription.

It carries out the reaction RNA(n) + a ribonucleoside 5'-triphosphate = RNA(n+1) + diphosphate. Its function is as follows. DNA-dependent RNA polymerase catalyzes the transcription of DNA into RNA using the four ribonucleoside triphosphates as substrates. The sequence is that of DNA-directed RNA polymerase subunit beta from Ruegeria sp. (strain TM1040) (Silicibacter sp.).